The primary structure comprises 351 residues: Phosphate acyltransferase (351 aa).

This sequence belongs to the PlsX family. Homodimer. Probably interacts with PlsY.

The protein localises to the cytoplasm. The enzyme catalyses a fatty acyl-[ACP] + phosphate = an acyl phosphate + holo-[ACP]. It functions in the pathway lipid metabolism; phospholipid metabolism. In terms of biological role, catalyzes the reversible formation of acyl-phosphate (acyl-PO(4)) from acyl-[acyl-carrier-protein] (acyl-ACP). This enzyme utilizes acyl-ACP as fatty acyl donor, but not acyl-CoA. This chain is Phosphate acyltransferase, found in Neisseria meningitidis serogroup B (strain ATCC BAA-335 / MC58).